Here is a 258-residue protein sequence, read N- to C-terminus: ProSAAS (258 aa).

Positions 1–33 (MAGSPLLCGPRAGGVGILVLLLLGLLRLPPTLS) are cleaved as a signal peptide. Positions 34 to 213 (ARPVKEPRSL…SSEPEAAPAP (180 aa)) are proSAAS(1-180). 3 disordered regions span residues 156–188 (PAPAAAPRPRPPVYDDGPTGPDVEDAGDETPDV), 204–230 (SSEPEAAPAPRRLRRSVDQDLGPEVPP), and 239–258 (RVKRLENPSPQAPARRLLPP). Over residues 177-188 (DVEDAGDETPDV) the composition is skewed to acidic residues. A compositionally biased stretch (low complexity) spans 204-213 (SSEPEAAPAP). The tract at residues 219–258 (SVDQDLGPEVPPENVLGALLRVKRLENPSPQAPARRLLPP) is C-terminal inhibitory domain; interacts with PCSK1. The Sufficient for inhibition of PCSK1 signature appears at 237–242 (LLRVKR).

Interacts via the C-terminal inhibitory domain with PCSK1 66 kDa form. Proteolytically cleaved in the Golgi. Little SAAS, PEN, PEN-20 and Big LEN are the major processed peptides in proSAAS-overexpressing AtT-20 pituitary corticotropic cell line. As to expression, expressed in brain (mostly hypothalamus and pituitary) and gut. Expressed in trigeminal ganglia and neuroendocrine cell lines. In terms of tissue distribution, expressed in pancreas, spinal cord and brain (most abundant in striatum, hippocampus, pons and medulla, and cortex) (at protein level).

It localises to the secreted. It is found in the golgi apparatus. The protein resides in the trans-Golgi network. In terms of biological role, may function in the control of the neuroendocrine secretory pathway. Proposed be a specific endogenous inhibitor of PCSK1. ProSAAS and Big PEN-LEN, both containing the C-terminal inhibitory domain, but not the processed peptides reduce PCSK1 activity in the endoplasmic reticulum and Golgi. It reduces the activity of the 87 kDa form but not the autocatalytically derived 66 kDa form of PCSK1. Subsequent processing of proSAAS may eliminate the inhibition. Slows down convertase-mediated processing of proopiomelanocortin and proenkephalin. May control the intracellular timing of PCSK1 rather than its total level of activity. Functionally, endogenous ligand for GPR171. Neuropeptide involved in the regulation of feeding. Its function is as follows. Endogenous ligand for GPR171. Neuropeptide involved in the regulation of feeding. The polypeptide is ProSAAS (Pcsk1n) (Mus musculus (Mouse)).